We begin with the raw amino-acid sequence, 465 residues long: Fumarate hydratase class II (465 aa).

Substrate is bound by residues 98-100, arginine 126, 129-132, 139-141, and threonine 187; these read SGT, HPND, and SSN. Catalysis depends on histidine 188, which acts as the Proton donor/acceptor. Residue serine 318 is part of the active site. Residues serine 319 and 324–326 contribute to the substrate site; that span reads KVN.

The protein belongs to the class-II fumarase/aspartase family. Fumarase subfamily. Homotetramer.

It is found in the cytoplasm. The enzyme catalyses (S)-malate = fumarate + H2O. It functions in the pathway carbohydrate metabolism; tricarboxylic acid cycle; (S)-malate from fumarate: step 1/1. Its function is as follows. Involved in the TCA cycle. Catalyzes the stereospecific interconversion of fumarate to L-malate. This chain is Fumarate hydratase class II, found in Yersinia pestis.